The chain runs to 199 residues: GTP cyclohydrolase 1 (199 aa).

Zn(2+)-binding residues include cysteine 89, histidine 92, and cysteine 161.

It belongs to the GTP cyclohydrolase I family. As to quaternary structure, toroid-shaped homodecamer, composed of two pentamers of five dimers.

It carries out the reaction GTP + H2O = 7,8-dihydroneopterin 3'-triphosphate + formate + H(+). The protein operates within cofactor biosynthesis; 7,8-dihydroneopterin triphosphate biosynthesis; 7,8-dihydroneopterin triphosphate from GTP: step 1/1. The sequence is that of GTP cyclohydrolase 1 from Bifidobacterium longum (strain NCC 2705).